Reading from the N-terminus, the 42-residue chain is Statherin (42 aa).

Residues 1 to 6 are hydroxyapatite-binding; inhibits crystal growth; it reads DSSEEK. Phosphoserine is present on residues serine 2 and serine 3. The tract at residues 18 to 42 is disordered; sequence RYGPYQPFVPPPLYPQPYQPYQPQY. The hydrophobic; inhibits precipitation of calcium phosphate salts stretch occupies residues 18–42; that stretch reads RYGPYQPFVPPPLYPQPYQPYQPQY. Positions 24 to 42 are enriched in pro residues; the sequence is PFVPPPLYPQPYQPYQPQY.

This sequence belongs to the histatin/statherin family. As to expression, secreted by parotid and submandibular glands.

Its subcellular location is the secreted. Its function is as follows. Salivary protein that stabilizes saliva supersaturated with calcium salts by inhibiting the precipitation of calcium phosphate salts. It also modulates hydroxyapatite crystal formation on the tooth surface. The protein is Statherin (STATH) of Macaca arctoides (Stump-tailed macaque).